The sequence spans 668 residues: UvrABC system protein B (668 aa).

The Helicase ATP-binding domain maps to 31–188; the sequence is HGIEAGEKAQ…RKLVNIQFER (158 aa). 44 to 51 lines the ATP pocket; it reads GATGTGKT. Positions 97-120 match the Beta-hairpin motif; it reads YYDYYQPEAYVPSSDTYIEKDSSI. Positions 435–601 constitute a Helicase C-terminal domain; sequence QMDDLVGEIN…TIIKPIRDLI (167 aa). In terms of domain architecture, UVR spans 630–665; that stretch reads EKLIARLEDEMRAAAKKLDFEQAASLRDTIMDMKTE.

The protein belongs to the UvrB family. In terms of assembly, forms a heterotetramer with UvrA during the search for lesions. Interacts with UvrC in an incision complex.

The protein resides in the cytoplasm. In terms of biological role, the UvrABC repair system catalyzes the recognition and processing of DNA lesions. A damage recognition complex composed of 2 UvrA and 2 UvrB subunits scans DNA for abnormalities. Upon binding of the UvrA(2)B(2) complex to a putative damaged site, the DNA wraps around one UvrB monomer. DNA wrap is dependent on ATP binding by UvrB and probably causes local melting of the DNA helix, facilitating insertion of UvrB beta-hairpin between the DNA strands. Then UvrB probes one DNA strand for the presence of a lesion. If a lesion is found the UvrA subunits dissociate and the UvrB-DNA preincision complex is formed. This complex is subsequently bound by UvrC and the second UvrB is released. If no lesion is found, the DNA wraps around the other UvrB subunit that will check the other stand for damage. This chain is UvrABC system protein B, found in Levilactobacillus brevis (strain ATCC 367 / BCRC 12310 / CIP 105137 / JCM 1170 / LMG 11437 / NCIMB 947 / NCTC 947) (Lactobacillus brevis).